We begin with the raw amino-acid sequence, 859 residues long: Protein SEY1 (859 aa).

Residues 1 to 742 (MMMNSHFAGV…KRSAIGGITQ (742 aa)) lie on the Cytoplasmic side of the membrane. The GB1/RHD3-type G domain maps to 49 to 291 (GFNYHLISVF…FQPQYHRRIP (243 aa)). 59–66 (GSQSTGKS) provides a ligand contact to GTP. The stretch at 476-496 (FEHELKVYRKDLDDVSGRLRK) forms a coiled coil. The tract at residues 525-544 (LGTGRGGSGAPEHGERPPSE) is disordered. Residues 743-763 (VPLYFYGLLVALGWNEIVAVL) traverse the membrane as a helical segment. Topologically, residues 764–766 (RNP) are lumenal. A helical transmembrane segment spans residues 767–787 (VYFIFLILCAVGAYVTYTLNL). The Cytoplasmic portion of the chain corresponds to 788–859 (WGPMIRMGNA…DAEVEDLDDI (72 aa)). The disordered stretch occupies residues 816-859 (SSESGRQAMAMSGNQPRGESVRMNRLNGNGKKDEDAEVEDLDDI). Over residues 850 to 859 (DAEVEDLDDI) the composition is skewed to acidic residues.

It belongs to the TRAFAC class dynamin-like GTPase superfamily. GB1/RHD3 GTPase family. RHD3 subfamily.

Its subcellular location is the endoplasmic reticulum membrane. Functionally, cooperates with the reticulon proteins and tubule-shaping DP1 family proteins to generate and maintain the structure of the tubular endoplasmic reticulum network. Has GTPase activity, which is required for its function in ER organization. This is Protein SEY1 from Phaeosphaeria nodorum (strain SN15 / ATCC MYA-4574 / FGSC 10173) (Glume blotch fungus).